The sequence spans 442 residues: Putative arsenical pump membrane protein (442 aa).

Transmembrane regions (helical) follow at residues 22-42 (IPAT…LADL), 56-76 (ILAT…YWVA), 85-105 (GSGI…TIFL), 107-127 (NDGS…YLGL), 136-156 (LLSG…SNIV), 174-194 (MMFV…FMFF), 250-270 (LFAA…GSFI), 294-314 (IFIF…IGFT), 328-347 (SLAH…SNLF), 378-398 (IIGS…TLIW), and 419-439 (IIII…WISW).

Belongs to the ArsB family.

The protein resides in the cell membrane. The protein is Putative arsenical pump membrane protein (ywrK) of Bacillus subtilis (strain 168).